We begin with the raw amino-acid sequence, 535 residues long: CTP synthase (535 aa).

One can recognise a Glutamine amidotransferase type-1 domain in the interval 300-535 (RIGIVGKYAP…LVSASYERSK (236 aa)). Catalysis depends on for GATase activity residues C385, H509, and E511.

The protein belongs to the CTP synthase family.

It catalyses the reaction UTP + L-glutamine + ATP + H2O = CTP + L-glutamate + ADP + phosphate + 2 H(+). It participates in pyrimidine metabolism; CTP biosynthesis via de novo pathway; CTP from UDP: step 2/2. Catalyzes the ATP-dependent amination of UTP to CTP with either L-glutamine or ammonia as the source of nitrogen. The polypeptide is CTP synthase (Encephalitozoon cuniculi (strain GB-M1) (Microsporidian parasite)).